The sequence spans 125 residues: Calcitonin receptor-stimulating peptide 1 (125 aa).

The first 25 residues, 1–25, serve as a signal peptide directing secretion; the sequence is MGFWKFPPFLVLSILVLYQAGMFHA. Positions 26–77 are excised as a propeptide; the sequence is APFRSVFDGRFDPATLDEEESRLLLAAMVNDYEQMRTRESEKAQKTEGSRIQ. Cys-81 and Cys-86 are disulfide-bonded.

This sequence belongs to the calcitonin family.

The protein resides in the secreted. Stimulates cAMP production via the calcitonin receptor (CT) but not via the CT-like (CL) receptor. The polypeptide is Calcitonin receptor-stimulating peptide 1 (CRSP1) (Ovis aries (Sheep)).